Consider the following 176-residue polypeptide: Large ribosomal subunit protein uL10 (176 aa).

The protein belongs to the universal ribosomal protein uL10 family. Part of the ribosomal stalk of the 50S ribosomal subunit. The N-terminus interacts with L11 and the large rRNA to form the base of the stalk. The C-terminus forms an elongated spine to which L12 dimers bind in a sequential fashion forming a multimeric L10(L12)X complex.

Its function is as follows. Forms part of the ribosomal stalk, playing a central role in the interaction of the ribosome with GTP-bound translation factors. This Acaryochloris marina (strain MBIC 11017) protein is Large ribosomal subunit protein uL10.